The primary structure comprises 817 residues: Actin filament-associated protein 1-like 2 (817 aa).

Phosphotyrosine is present on tyrosine 56. The tract at residues histidine 63–proline 164 is disordered. Positions tyrosine 123–glutamate 139 are enriched in acidic residues. PH domains are found at residues aspartate 175 to glycine 271 and serine 353 to glycine 447. The residue at position 408 (serine 408) is a Phosphoserine. At tyrosine 413 the chain carries Phosphotyrosine. Serine 484 is modified (phosphoserine). The segment covering threonine 512–proline 528 has biased composition (low complexity). Disordered regions lie at residues threonine 512–lysine 657 and glycine 754–alanine 786. Residues glutamate 652 to alanine 748 are a coiled coil. Polar residues predominate over residues glycine 754–glutamate 763. Positions proline 767–proline 782 are enriched in low complexity.

In terms of assembly, interacts with SRC. Interacts with LCK when tyrosine phosphorylated. In terms of processing, tyrosine phosphorylated (by SRC).

The protein resides in the cytoplasm. Its function is as follows. May play a role in a signaling cascade by enhancing the kinase activity of SRC. Contributes to SRC-regulated transcription activation. This chain is Actin filament-associated protein 1-like 2 (AFAP1L2), found in Bos taurus (Bovine).